The sequence spans 317 residues: Ribonuclease H2 subunit A (317 aa).

In terms of domain architecture, RNase H type-2 spans 43–270 (PCCLGVDEAG…AKDMLETKGG (228 aa)). 3 residues coordinate a divalent metal cation: aspartate 49, glutamate 50, and aspartate 166.

Belongs to the RNase HII family. Eukaryotic subfamily. Mn(2+) serves as cofactor. Requires Mg(2+) as cofactor.

It catalyses the reaction Endonucleolytic cleavage to 5'-phosphomonoester.. Endonuclease that specifically degrades the RNA of RNA-DNA hybrids. Participates in DNA replication. The protein is Ribonuclease H2 subunit A (rnh-201) of Neurospora crassa (strain ATCC 24698 / 74-OR23-1A / CBS 708.71 / DSM 1257 / FGSC 987).